A 391-amino-acid polypeptide reads, in one-letter code: ETS-related transcription factor Elf-3 (391 aa).

Positions 65-151 (DPLAVLHLAE…AQLRDLTSNS (87 aa)) constitute a PNT domain. The tract at residues 200 to 271 (YCSTYGPGAP…HGKRKRGRPR (72 aa)) is disordered. Residues 211 to 229 (PGSSDVSTARTATPQSSHA) are compositionally biased toward polar residues. The span at 242–261 (TESKVFPRDGFPDYKKGEPK) shows a compositional bias: basic and acidic residues. The segment covering 262–271 (HGKRKRGRPR) has biased composition (basic residues). Residues 293 to 375 (THLWEFIRDI…DGRRLVYKFG (83 aa)) constitute a DNA-binding region (ETS).

Belongs to the ETS family. Interacts with TBP. Interacts with CREBBP and EP300; these act as transcriptional coactivators of ELF3 and positively modulate its function. Interacts with XRCC5/KU86 and XRCC6/KU70; these inhibit the ability of ELF3 to bind DNA and negatively modulate its transcriptional activity. Associated with CLND7 and POU2F3. Interacts with ZNF768. As to expression, expressed in small intestine, colon, lung, kidney and uterus. Also expressed in the corneal epithelium and conjunctiva of the developing and adult eye. Not detected in liver, spleen, thymus, brain, heart, skeletal muscle or ovary.

It localises to the cytoplasm. Its subcellular location is the nucleus. Its function is as follows. Transcriptional activator that binds and transactivates ETS sequences containing the consensus nucleotide core sequence GGA[AT]. Acts synergistically with POU2F3 to transactivate the SPRR2A promoter and with RUNX1 to transactivate the ANGPT1 promoter. Also transactivates collagenase, CCL20, CLND7, FLG, KRT8, NOS2, PTGS2, SPRR2B, TGFBR2 and TGM3 promoters. Represses KRT4 promoter activity. Involved in mediating vascular inflammation. May play an important role in epithelial cell differentiation and tumorigenesis. May be a critical downstream effector of the ERBB2 signaling pathway. May be associated with mammary gland development and involution. Plays an important role in the regulation of transcription with TATA-less promoters in preimplantation embryos, which is essential in preimplantation development. The protein is ETS-related transcription factor Elf-3 of Mus musculus (Mouse).